Consider the following 309-residue polypeptide: Homoserine O-acetyltransferase (309 aa).

The active-site Acyl-thioester intermediate is Cys-142. Substrate-binding residues include Lys-163 and Ser-192. The active-site Proton acceptor is the His-235. Glu-237 is an active-site residue. Position 249 (Arg-249) interacts with substrate.

This sequence belongs to the MetA family.

It localises to the cytoplasm. It catalyses the reaction L-homoserine + acetyl-CoA = O-acetyl-L-homoserine + CoA. The protein operates within amino-acid biosynthesis; L-methionine biosynthesis via de novo pathway; O-acetyl-L-homoserine from L-homoserine: step 1/1. In terms of biological role, transfers an acetyl group from acetyl-CoA to L-homoserine, forming acetyl-L-homoserine. This chain is Homoserine O-acetyltransferase, found in Allorhizobium ampelinum (strain ATCC BAA-846 / DSM 112012 / S4) (Agrobacterium vitis (strain S4)).